Reading from the N-terminus, the 121-residue chain is Acid shock protein (121 aa).

Residues 1–21 (MKKVLALMVAATLGLSSVAFA) form the signal peptide. The propeptide occupies 22-63 (ADTTATATPAATSTTATVAAQTKATQHQKHKVTKKTTEQKAQ). Residues 40–121 (AAQTKATQHQ…AKKPVAAPAA (82 aa)) are disordered. Over residues 74–83 (VQKAPVQKAQ) the composition is skewed to low complexity. The segment covering 84–93 (AAKKHVKKAS) has biased composition (basic residues). Positions 94-103 (VQKAPVQKAQ) are enriched in low complexity. Residues 104–113 (AAKKHHKTAK) show a composition bias toward basic residues.

It belongs to the Asr family. Proteolytic processing gives rise to the active protein.

The protein localises to the periplasm. Its function is as follows. Required for growth and/or survival at acidic conditions. This chain is Acid shock protein, found in Yersinia pseudotuberculosis serotype O:1b (strain IP 31758).